The following is a 311-amino-acid chain: Aquaporin Lacbi1:392091 (311 aa).

The Cytoplasmic segment spans residues 1–16 (MHPQVASLFDNVYEDL). A helical transmembrane segment spans residues 17-37 (AAATLEFIGTAFFLLFGLGGI). At 38–56 (QASTAEDTASGQPPASGIE) the chain is on the extracellular side. A helical membrane pass occupies residues 57 to 77 (HVLYISTCMGLSLVVSAWLFF). A topological domain (cytoplasmic) is located at residue Arg78. Residues 79–99 (VTGGLFNPNISFALLLVGGLK) form a helical membrane-spanning segment. The NPA 1 motif lies at 85 to 87 (NPN). Pro100 is a topological domain (extracellular). A helical membrane pass occupies residues 101 to 121 (LRFVLFCIAQLTGAIAGAAIV). At 122–143 (RGLTSAPLSVNNVLQQGTSAAQ) the chain is on the cytoplasmic side. A helical transmembrane segment spans residues 144 to 164 (GVFIEMFITAALVLSVLMLAA). At 165 to 168 (EKHE) the chain is on the extracellular side. The chain crosses the membrane as a helical span at residues 169 to 189 (ATPFAPVGIGLTLFACHLFAV). The Cytoplasmic segment spans residues 190–215 (YYTGAAMNSARAFGPAVISGFPEPQH). An NPA 2 motif is present at residues 197–199 (NSA). The chain crosses the membrane as a helical span at residues 216-236 (WVYWVGPFLGSLLGAGFYATL). The Extracellular segment spans residues 237 to 311 (KHYKYWHLNP…TSSRTNFSPV (75 aa)). Positions 276-311 (DEETRNGCASNEEGVRATGDEKSSNATSSRTNFSPV) are disordered. A compositionally biased stretch (basic and acidic residues) spans 288 to 298 (EGVRATGDEKS). Polar residues predominate over residues 299–311 (SNATSSRTNFSPV). An N-linked (GlcNAc...) asparagine glycan is attached at Asn300.

It belongs to the MIP/aquaporin (TC 1.A.8) family.

It is found in the membrane. It catalyses the reaction H2O(in) = H2O(out). The catalysed reaction is NH4(+)(in) = NH4(+)(out). Its function is as follows. Water channel required to facilitate the transport of water across membranes. Also enables low but statistically significant ammonium permeability. May be involved in fungal nitrogen (ammonium) support of the plant host in symbiosis. The sequence is that of Aquaporin Lacbi1:392091 from Laccaria bicolor (strain S238N-H82 / ATCC MYA-4686) (Bicoloured deceiver).